A 2167-amino-acid chain; its full sequence is Myosin-VIIa (2167 aa).

The Myosin motor domain occupies 63–733 (QGVEDMISLG…HDLFLEQERD (671 aa)). 156-163 (GESGAGKT) is an ATP binding site. 2 actin-binding regions span residues 612 to 634 (LDAL…KPNE) and 712 to 726 (QLGH…AHDL). IQ domains follow at residues 736-758 (LTRK…RFLR), 759-788 (LRAA…GYMR), 805-827 (LRGH…EYGH), and 828-857 (KMWA…EHKQ). Residues 886–919 (QHYRDRLHELERREIQEQLENRRRVEVNMNIIND) are a coiled coil. Residues 1008–1245 (YAKKALKHPL…PSWLELQATK (238 aa)) enclose the MyTH4 1 domain. In terms of domain architecture, FERM 1 spans 1250–1560 (IMLPITFMDG…YFLDGLKKRS (311 aa)). In terms of domain architecture, SH3 spans 1558 to 1627 (KRSKYVIALQ…PAETVYVLPT (70 aa)). Residues serine 1651 and serine 1654 each carry the phosphoserine modification. The 149-residue stretch at 1701 to 1849 (YSRDPIKAPL…PHQVEVEAIQ (149 aa)) folds into the MyTH4 2 domain. One can recognise an FERM 2 domain in the interval 1855–2158 (IFHKVYFPDD…SYISLMLTNM (304 aa)). Threonine 2045 carries the post-translational modification Phosphothreonine.

The protein belongs to the TRAFAC class myosin-kinesin ATPase superfamily. Myosin family. Homodimerizes in a two headed molecule through the formation of a coiled-coil rod. Homodimers motility is approximately 8-10 times slower than that of myosin V, and its step size is 30 nm, which is consistent with the presence of five IQ motifs in its neck region. Interacts with Cad99C (via the cytoplasmic domain). Interacts with zip and Sans. In terms of tissue distribution, expressed in the setae, micro- and macrochaetae on the head, thorax and wing.

It localises to the cytoplasm. It is found in the cell cortex. The protein localises to the cell projection. Its subcellular location is the microvillus. Myosins are actin-based motor molecules with ATPase activity. Unconventional myosins serve in intracellular movements: can function in cells as a single-molecule cargo transporter. A very slow and high-duty-ratio motor, may be suitable for tension maintenance of actin filaments. Their highly divergent tails are presumed to bind to membranous compartments, which would be moved relative to actin filaments. Plays a key role in the formation of cellular projections and other actin-based functions required for embryonic and larval viability. Necessary for auditory transduction: plays a role in Johnston's organ organization by functioning in scolopidial apical attachment and therefore to acoustic stimulus propagation from the antenna a2/a3 joint to transducing elements. Interaction with the myosin zip may be important for its function in scolopidial apical attachment. During oogenesis it has Cad99c-dependent and Cad99c-independent roles in regulating the shape and spacing of the follicle cell microvilli which secrete eggshell material such as the vitelline membrane. May be required for the normal expression of Cad99c in the follicle cell microvilli. This chain is Myosin-VIIa, found in Drosophila melanogaster (Fruit fly).